We begin with the raw amino-acid sequence, 397 residues long: MKKLLKSVLVFAALSSASSLQALPVGNPAEPSLMIDGILWEGFGGDPCDPCTTWCDAISMRVGYYGDFVFDRVLKTDVNKEFQMGAEPTTSDTAGLSNDPTTNVARPNPAYGKHMQDAEMFTNAAYMALNIWDRFDVFCTLGATTGYLKGNSASFNLVGLFGTKTQSTNFNTAKLVPNTALNQAVVELYTDTTFAWSVGARAALWECGCATLGASFQYAQSKPKVEELNVLCDASEFTINKPKGYVGAEFPLDITAGTEAATGTKDASIDYHEWQASLALSYRLNMFTPYIGVKWSRVSFDADTIRIAQPKLAEAVLDVTTLNPTIAGKGSVVASGSENELADTMQIVSLQLNKMKSRKSCGIAVGTTIVDADKYAVTVETRLIDERAAHVNAQFRF.

The N-terminal stretch at 1-22 (MKKLLKSVLVFAALSSASSLQA) is a signal peptide.

It belongs to the chlamydial porin (CP) (TC 1.B.2) family. Part of a disulfide cross-linked outer membrane complex (COMC) composed of the major outer membrane porin (MOMP), the small cysteine-rich protein (OmcA) and the large cysteine-rich periplasmic protein (OmcB).

It localises to the cell outer membrane. In elementary bodies (EBs, the infectious stage, which is able to survive outside the host cell) provides the structural integrity of the outer envelope through disulfide cross-links with the small cysteine-rich protein and the large cysteine-rich periplasmic protein. It has been described in publications as the Sarkosyl-insoluble COMC (Chlamydia outer membrane complex), and serves as the functional equivalent of peptidoglycan. In terms of biological role, permits diffusion of specific solutes through the outer membrane. The chain is Major outer membrane porin, serovar L3 (ompA) from Chlamydia trachomatis.